The sequence spans 707 residues: MDSCHKIDYGLYALEILAQYHNVSVNPEEIKHRFDTDGTGLGLTSWLLAAKSLELKVKQVKKTIDRLNFIFLPALVWREDGRHFILTKISKEVNRYLIFDLEQRNPRVLEQSEFEALYQGHIILITSRSSVTGKLAKFDFTWFIPAIIKYRRIFIETLVVSVFLQLFALITPLFFQVVMDKVLVHRGFSTLNVITVALSVVVVFEIILSGLRTYIFAHSTSRIDVELGAKLFRHLLALPISYFESRRVGDTVARVRELDQIRNFLTGQALTSVLDLLFSLIFFAVMWYYSPKLTLVILFSLPCYAAWSVFISPILRRRLDDKFSRNADNQSFLVESVTAINTIKAMAVSPQMTNIWDKQLAGYVAAGFKVTVLATIGQQGIQLIQKTVMIINLWLGAHLVISGDLSIGQLIAFNMLAGQIVAPVIRLAQIWQDFQQVGISVTRLGDVLNSPTESYHGKLTLPEINGDITFRNIRFRYKPDSPVILDNINLSIKQGEVIGIVGRSGSGKSTLTKLIQRFYIPENGQVLIDGHDLALADPNWLRRQVGVVLQDNVLLNRSIIDNISLANPGMSVEKVIYAAKLAGAHDFISELREGYNTIVGEQGAGLSGGQRQRIAIARALVNNPKILIFDEATSALDYESEHVIMRNMHKICKGRTVIIIAHRLSTVKNADRIIVMEKGKIVEQGKHKELLSEPESLYSYLYQLQSD.

In terms of domain architecture, Peptidase C39 spans 3-125; the sequence is SCHKIDYGLY…ALYQGHIILI (123 aa). Histidine 83 is an active-site residue. The ABC transmembrane type-1 domain occupies 154–436; that stretch reads FIETLVVSVF…LAQIWQDFQQ (283 aa). A run of 5 helical transmembrane segments spans residues 158-178, 191-211, 269-289, 295-315, and 388-408; these read LVVS…FQVV, LNVI…LSGL, ALTS…MWYY, LVIL…SPIL, and VMII…LSIG. Positions 468-703 constitute an ABC transporter domain; the sequence is ITFRNIRFRY…PESLYSYLYQ (236 aa). 502 to 509 is a binding site for ATP; sequence GRSGSGKS.

This sequence belongs to the ABC transporter superfamily. Protein-1 exporter (TC 3.A.1.109) family. In terms of assembly, homodimer.

It localises to the cell inner membrane. Functionally, part of the ABC transporter complex HlyBD involved in hemolysin export. Transmembrane domains (TMD) form a pore in the inner membrane and the ATP-binding domain (NBD) is responsible for energy generation. This is Alpha-hemolysin translocation ATP-binding protein HlyB (hlyB) from Escherichia coli.